A 213-amino-acid polypeptide reads, in one-letter code: Thymidine kinase (213 aa).

Residues 20 to 27 (GPMFSGKT) and 93 to 96 (DEAQ) contribute to the ATP site. Glu-94 (proton acceptor) is an active-site residue. Zn(2+)-binding residues include Cys-150, Cys-153, Cys-185, and His-188.

The protein belongs to the thymidine kinase family. As to quaternary structure, homotetramer.

The protein resides in the cytoplasm. It carries out the reaction thymidine + ATP = dTMP + ADP + H(+). The polypeptide is Thymidine kinase (Mycoplasma genitalium (strain ATCC 33530 / DSM 19775 / NCTC 10195 / G37) (Mycoplasmoides genitalium)).